Reading from the N-terminus, the 98-residue chain is Small ribosomal subunit protein bS18 (98 aa).

It belongs to the bacterial ribosomal protein bS18 family. Part of the 30S ribosomal subunit. Forms a tight heterodimer with protein bS6.

Functionally, binds as a heterodimer with protein bS6 to the central domain of the 16S rRNA, where it helps stabilize the platform of the 30S subunit. The sequence is that of Small ribosomal subunit protein bS18 from Flavobacterium psychrophilum (strain ATCC 49511 / DSM 21280 / CIP 103535 / JIP02/86).